The sequence spans 442 residues: Septin-8 (442 aa).

Residues 1–16 are compositionally biased toward basic and acidic residues; sequence MAATDLERISNAEPEP. A disordered region spans residues 1–21; the sequence is MAATDLERISNAEPEPRSLSL. Ala2 is subject to N-acetylalanine. A Phosphoserine modification is found at Ser10. The region spanning 41–307 is the Septin-type G domain; it reads QGFSFNILCV…ELYRRCKLEE (267 aa). A G1 motif region spans residues 51-58; it reads GETGIGKS. Residues 51 to 58, Gly106, 187 to 195, Gly241, and Arg256 each bind GTP; these read GETGIGKS and KADTISKSE. The G3 motif stretch occupies residues 103–106; it reads DAVG. The segment at 186–189 is G4 motif; sequence AKAD. Residues 322–407 are a coiled coil; that stretch reads LQETYEAKRK…FNCRKAAMEA (86 aa). Residues 411–420 are compositionally biased toward polar residues; the sequence is QALHATSQQP. The disordered stretch occupies residues 411 to 442; it reads QALHATSQQPLRKDKDKKKVGGWSSIYSVTIP.

It belongs to the TRAFAC class TrmE-Era-EngA-EngB-Septin-like GTPase superfamily. Septin GTPase family. In terms of assembly, septins polymerize into heterooligomeric protein complexes that form filaments, and can associate with cellular membranes, actin filaments and microtubules. GTPase activity is required for filament formation. Interacts with SEPTIN7. Interacts with CDK14, SEPTIN4 and SEPTIN5. Interacts with VAMP2; the interaction inhibits interaction of VAMP2 with SYP. Interacts with STX1A. Expressed in cerebrum, hippocampus and cerebellum (at protein level). Expressed in heart (at protein level).

Its subcellular location is the cytoplasm. The protein localises to the cytoskeleton. It is found in the synapse. It localises to the cell projection. The protein resides in the axon. Its subcellular location is the cytoplasmic vesicle. The protein localises to the secretory vesicle. It is found in the synaptic vesicle membrane. It localises to the presynapse. In terms of biological role, filament-forming cytoskeletal GTPase. May play a role in platelet secretion. Seems to participate in the process of SNARE complex formation in synaptic vesicles. The chain is Septin-8 from Rattus norvegicus (Rat).